A 566-amino-acid chain; its full sequence is Peroxisomal targeting signal receptor (566 aa).

Residue cysteine 5 forms a Glycyl cysteine thioester (Cys-Gly) (interchain with G-Cter in ubiquitin) linkage. Positions serine 6–valine 28 are amphipathic helix 1 (AH1). A Glycyl lysine isopeptide (Lys-Gly) (interchain with G-Cter in ubiquitin) cross-link involves residue lysine 17. Positions arginine 53–leucine 71 are amphipathic helix 2 (AH2). Positions glycine 88–isoleucine 159 are disordered. Positions serine 94 to serine 142 are enriched in polar residues. Residues tryptophan 111 to phenylalanine 115 carry the WxxxF/Y motif 1 motif. The amphipathic helix 3 (AH3) stretch occupies residues proline 145–glycine 151. The WxxxF/Y motif 2 signature appears at tryptophan 187–phenylalanine 191. The amphipathic helix 4 (AH4) stretch occupies residues phenylalanine 225–leucine 241. The WxxxF/Y motif 3 motif lies at tryptophan 248 to tyrosine 252. TPR repeat units follow at residues asparagine 277 to histidine 311, valine 312 to asparagine 345, proline 416 to aspartate 449, leucine 451 to phenylalanine 483, and arginine 485 to glutamate 517.

The protein belongs to the peroxisomal targeting signal receptor family. In terms of assembly, interacts (via WxxxF/Y and LVxEF motifs) with PEX14; promoting translocation through the PEX13-PEX14 docking complex. Post-translationally, monoubiquitinated at Cys-5 by PEX2 during PEX5 passage through the retrotranslocation channel: monoubiquitination acts as a signal for PEX5 extraction and is required for proper export from peroxisomes and recycling. When PEX5 recycling is compromised, polyubiquitinated at Lys-17 by PEX10 during its passage through the retrotranslocation channel, leading to its degradation.

It localises to the cytoplasm. Its subcellular location is the cytosol. The protein resides in the peroxisome matrix. Functionally, receptor that mediates peroxisomal import of proteins containing a C-terminal PTS1-type tripeptide peroxisomal targeting signal (SKL-type). Binds to cargo proteins containing a PTS1 peroxisomal targeting signal in the cytosol, and translocates them into the peroxisome matrix by passing through the PEX13-PEX14 docking complex along with cargo proteins. PEX5 receptor is then retrotranslocated into the cytosol, leading to release of bound cargo in the peroxisome matrix, and reset for a subsequent peroxisome import cycle. This Kluyveromyces lactis (strain ATCC 8585 / CBS 2359 / DSM 70799 / NBRC 1267 / NRRL Y-1140 / WM37) (Yeast) protein is Peroxisomal targeting signal receptor (PEX5).